The sequence spans 120 residues: NAD(P)H-quinone oxidoreductase subunit 3, chloroplastic (120 aa).

3 consecutive transmembrane segments (helical) span residues 9–29 (IFWA…LISG), 64–84 (MFAL…PWAM), and 88–108 (VLGL…IVGS).

It belongs to the complex I subunit 3 family. NDH is composed of at least 16 different subunits, 5 of which are encoded in the nucleus.

Its subcellular location is the plastid. It is found in the chloroplast thylakoid membrane. It carries out the reaction a plastoquinone + NADH + (n+1) H(+)(in) = a plastoquinol + NAD(+) + n H(+)(out). It catalyses the reaction a plastoquinone + NADPH + (n+1) H(+)(in) = a plastoquinol + NADP(+) + n H(+)(out). Functionally, NDH shuttles electrons from NAD(P)H:plastoquinone, via FMN and iron-sulfur (Fe-S) centers, to quinones in the photosynthetic chain and possibly in a chloroplast respiratory chain. The immediate electron acceptor for the enzyme in this species is believed to be plastoquinone. Couples the redox reaction to proton translocation, and thus conserves the redox energy in a proton gradient. The polypeptide is NAD(P)H-quinone oxidoreductase subunit 3, chloroplastic (Manihot esculenta (Cassava)).